Here is a 569-residue protein sequence, read N- to C-terminus: Probable santalene synthase (569 aa).

Residues Arg-284, Asp-321, Asp-325, Arg-460, and Asn-463 each coordinate (2E)-geranyl diphosphate. The Mg(2+) site is built by Asp-321 and Asp-325. The DDXXD motif motif lies at Asp-321 to Asp-325. Residues Asn-463, Thr-467, and Glu-471 each coordinate Mg(2+).

The protein belongs to the terpene synthase family. Tpsb subfamily. Requires Mg(2+) as cofactor. The cofactor is Mn(2+).

Functionally, catalyzes the formation of santalene. The sequence is that of Probable santalene synthase (SSY) from Santalum murrayanum (Bitter quandong).